Consider the following 111-residue polypeptide: Nucleoid-associated protein VF_1686 (111 aa).

Disordered regions lie at residues 1-23 (MFGG…DRMQ) and 89-111 (TQKE…KMPF).

The protein belongs to the YbaB/EbfC family. As to quaternary structure, homodimer.

It localises to the cytoplasm. The protein localises to the nucleoid. Functionally, binds to DNA and alters its conformation. May be involved in regulation of gene expression, nucleoid organization and DNA protection. This is Nucleoid-associated protein VF_1686 from Aliivibrio fischeri (strain ATCC 700601 / ES114) (Vibrio fischeri).